The sequence spans 232 residues: MSGFTFKQFHINQDSCAMKVGTDGILLGAWADVKHCKNILDMGSGTGLLTLMLAQRTEENCQIQAVELDPIAAKQAQENINNSVWKNRIQLTQADIQHFLQTTEQTFDLIVANPPYFEQGIACKNEERELARYTKQSHLNWLEWAATRLSENGKISFVLPYDAGKTLTKSTALFCIKQTNVITKIGKTPQRMLLTFAKQPEVLMQDQLVIYDADNQYTEAFIELTKDFYLKF.

This sequence belongs to the methyltransferase superfamily. tRNA (adenine-N(6)-)-methyltransferase family.

The protein localises to the cytoplasm. The enzyme catalyses adenosine(37) in tRNA1(Val) + S-adenosyl-L-methionine = N(6)-methyladenosine(37) in tRNA1(Val) + S-adenosyl-L-homocysteine + H(+). Specifically methylates the adenine in position 37 of tRNA(1)(Val) (anticodon cmo5UAC). This is tRNA1(Val) (adenine(37)-N6)-methyltransferase from Haemophilus influenzae (strain 86-028NP).